Consider the following 313-residue polypeptide: Metal ABC transporter substrate-binding lipoprotein (313 aa).

A signal peptide spans 1–23; it reads MIEKYKNILITFIALAAIVFLVG. Cysteine 24 carries the N-palmitoyl cysteine lipid modification. Residue cysteine 24 is the site of S-diacylglycerol cysteine attachment. Residues histidine 71, histidine 143, glutamate 209, and aspartate 284 each contribute to the Zn(2+) site.

This sequence belongs to the bacterial solute-binding protein 9 family. Lipoprotein receptor antigen (Lrai) subfamily.

The protein resides in the cell membrane. Functionally, part of an ATP-driven transport system for a metal; probably for manganese. The polypeptide is Metal ABC transporter substrate-binding lipoprotein (mtsA) (Lactococcus lactis subsp. lactis (strain IL1403) (Streptococcus lactis)).